The following is a 216-amino-acid chain: Peptide methionine sulfoxide reductase MsrA (216 aa).

C57 is an active-site residue.

The protein belongs to the MsrA Met sulfoxide reductase family.

It catalyses the reaction L-methionyl-[protein] + [thioredoxin]-disulfide + H2O = L-methionyl-(S)-S-oxide-[protein] + [thioredoxin]-dithiol. The catalysed reaction is [thioredoxin]-disulfide + L-methionine + H2O = L-methionine (S)-S-oxide + [thioredoxin]-dithiol. In terms of biological role, has an important function as a repair enzyme for proteins that have been inactivated by oxidation. Catalyzes the reversible oxidation-reduction of methionine sulfoxide in proteins to methionine. This is Peptide methionine sulfoxide reductase MsrA from Agrobacterium fabrum (strain C58 / ATCC 33970) (Agrobacterium tumefaciens (strain C58)).